Here is a 621-residue protein sequence, read N- to C-terminus: Putative acyltransferase plsB1 (621 aa).

Positions His123–Asp128 match the HXXXXD motif motif.

Belongs to the GPAT/DAPAT family.

The protein resides in the cell membrane. The sequence is that of Putative acyltransferase plsB1 (plsB1) from Mycobacterium bovis (strain ATCC BAA-935 / AF2122/97).